A 188-amino-acid polypeptide reads, in one-letter code: Peptide deformylase (188 aa).

Positions 94 and 136 each coordinate Fe cation. Glu137 is a catalytic residue. His140 contributes to the Fe cation binding site.

The protein belongs to the polypeptide deformylase family. The cofactor is Fe(2+).

The enzyme catalyses N-terminal N-formyl-L-methionyl-[peptide] + H2O = N-terminal L-methionyl-[peptide] + formate. Functionally, removes the formyl group from the N-terminal Met of newly synthesized proteins. Requires at least a dipeptide for an efficient rate of reaction. N-terminal L-methionine is a prerequisite for activity but the enzyme has broad specificity at other positions. This is Peptide deformylase from Chlorobium phaeobacteroides (strain DSM 266 / SMG 266 / 2430).